The following is a 1499-amino-acid chain: Tyrosine-protein phosphatase non-receptor type 23 (1499 aa).

The BRO1 domain maps to 1–219 (LNVNLMLGQA…AKIEDKNEVL (219 aa)). TPR repeat units follow at residues 75 to 108 (AVAHLHMGKQAEEQQKFGERVAYFQSALDKLNEA) and 199 to 232 (EEKAKLLREMLAKIEDKNEVLDQFMDSMQLDPDT). Coiled coils occupy residues 278–305 (EASLKDIRDLLEEDELQEQKLQETLGQA), 377–464 (KAVL…NVQY), and 506–537 (YADLESKVAALLERAQSLCRAQEAARQQLLDR). Disordered regions lie at residues 536–583 (DREL…MMAG) and 718–1006 (HMAL…LLQP). The interval 598 to 993 (HFSPGPFPGS…SSSPESQHGG (396 aa)) is his. Residues 724–752 (GPAPAPPQPCFPVPQPVPQSVPQPQPLPT) show a composition bias toward pro residues. Positions 754-763 (YTYSIGTKQH) are enriched in polar residues. Arg785 carries the post-translational modification Omega-N-methylarginine. Composition is skewed to pro residues over residues 785–827 (RIGP…PQPQ), 856–866 (LTPPPPYPFTP), 900–909 (FPSPGPPHPH), and 934–972 (GPPPANQPAPSPHLVPSPAPSPGPGPVPSRPPTAEPPPC). 20 repeat units span residues 788-789 (PQ), 790-791 (PP), 792-793 (PQ), 794-795 (LQ), 796-797 (PQ), 798-799 (PQ), 800-801 (PQ), 802-803 (PQ), 804-805 (PQ), 806-807 (PP), 808-809 (PQ), 810-811 (PQ), 812-813 (PQ), 814-815 (PQ), 816-817 (PQ), 818-819 (PQ), 820-821 (PQ), 822-823 (PQ), 824-825 (PQ), and 826-827 (PQ). Residues 788-827 (PQPPPQLQPQPQPQPQPQPPPQPQPQPQPQPQPQPQPQPQ) form a 20 X 2 AA approximate tandem repeats of P-Q region. 2 positions are modified to phosphoserine: Ser985 and Ser986. Thr994 carries the post-translational modification Phosphothreonine. One can recognise a Tyrosine-protein phosphatase domain in the interval 1055–1315 (DAVWRELQEA…KFCHEALVRH (261 aa)). Cys1255 serves as the catalytic Phosphocysteine intermediate. Disordered stretches follow at residues 1322–1351 (RHGVPPPGKPVASMSVSQKSHLPQDSQDLV) and 1381–1499 (ASLP…LNKT). Residues 1335–1348 (MSVSQKSHLPQDSQ) show a composition bias toward polar residues. The span at 1390 to 1419 (PGLPPASLPEPTPAPPSSPPPPSSPLPEPP) shows a compositional bias: pro residues. Residues 1427-1450 (VPEAPSLGPPSSSLELLASLTPEA) are compositionally biased toward low complexity. Polar residues predominate over residues 1464–1473 (SKQNFLQAHN). Arg1478 carries the post-translational modification Omega-N-methylarginine. Residues 1482–1499 (PTDDPLSLLDPLWTLNKT) show a composition bias toward low complexity.

This sequence belongs to the protein-tyrosine phosphatase family. Non-receptor class subfamily. In terms of assembly, interacts with GRAP2 and GRB2. Interacts with UBAP1 and CHMP4B. In terms of tissue distribution, ubiquitously expressed, with highest levels in brain, testis and kidney, and lowest levels in skeletal muscle.

It is found in the nucleus. The protein localises to the cytoplasm. The protein resides in the cytoplasmic vesicle. It localises to the endosome. Its subcellular location is the cytoskeleton. It is found in the cilium basal body. The catalysed reaction is O-phospho-L-tyrosyl-[protein] + H2O = L-tyrosyl-[protein] + phosphate. Its function is as follows. Plays a role in sorting of endocytic ubiquitinated cargos into multivesicular bodies (MVBs) via its interaction with the ESCRT-I complex (endosomal sorting complex required for transport I), and possibly also other ESCRT complexes. May act as a negative regulator of Ras-mediated mitogenic activity. Plays a role in ciliogenesis. The sequence is that of Tyrosine-protein phosphatase non-receptor type 23 (Ptpn23) from Rattus norvegicus (Rat).